We begin with the raw amino-acid sequence, 367 residues long: Histidinol-phosphate aminotransferase (367 aa).

Lys226 is modified (N6-(pyridoxal phosphate)lysine).

Belongs to the class-II pyridoxal-phosphate-dependent aminotransferase family. Histidinol-phosphate aminotransferase subfamily. As to quaternary structure, homodimer. Requires pyridoxal 5'-phosphate as cofactor.

It carries out the reaction L-histidinol phosphate + 2-oxoglutarate = 3-(imidazol-4-yl)-2-oxopropyl phosphate + L-glutamate. Its pathway is amino-acid biosynthesis; L-histidine biosynthesis; L-histidine from 5-phospho-alpha-D-ribose 1-diphosphate: step 7/9. The chain is Histidinol-phosphate aminotransferase from Wolinella succinogenes (strain ATCC 29543 / DSM 1740 / CCUG 13145 / JCM 31913 / LMG 7466 / NCTC 11488 / FDC 602W) (Vibrio succinogenes).